The sequence spans 109 residues: Large ribosomal subunit protein uL22 (109 aa).

It belongs to the universal ribosomal protein uL22 family. As to quaternary structure, part of the 50S ribosomal subunit.

Its function is as follows. This protein binds specifically to 23S rRNA; its binding is stimulated by other ribosomal proteins, e.g. L4, L17, and L20. It is important during the early stages of 50S assembly. It makes multiple contacts with different domains of the 23S rRNA in the assembled 50S subunit and ribosome. In terms of biological role, the globular domain of the protein is located near the polypeptide exit tunnel on the outside of the subunit, while an extended beta-hairpin is found that lines the wall of the exit tunnel in the center of the 70S ribosome. The sequence is that of Large ribosomal subunit protein uL22 from Dehalococcoides mccartyi (strain ATCC BAA-2266 / KCTC 15142 / 195) (Dehalococcoides ethenogenes (strain 195)).